Here is a 407-residue protein sequence, read N- to C-terminus: Substance-P receptor (407 aa).

The segment at 1–20 (MDNVLPVDSDLFPNTSTNTS) is disordered. Residues 1 to 31 (MDNVLPVDSDLFPNTSTNTSESNQFVQPTWQ) lie on the Extracellular side of the membrane. 2 N-linked (GlcNAc...) asparagine glycosylation sites follow: asparagine 14 and asparagine 18. The chain crosses the membrane as a helical span at residues 32-54 (IVLWAAAYTVIVVTSVVGNVVVI). The Cytoplasmic segment spans residues 55 to 64 (WIILAHKRMR). Residues 65 to 86 (TVTNYFLVNLAFAEACMAAFNT) form a helical membrane-spanning segment. The Extracellular portion of the chain corresponds to 87 to 106 (VVNFTYAVHNVWYYGLFYCK). A disulfide bridge links cysteine 105 with cysteine 180. A helical membrane pass occupies residues 107-128 (FHNFFPIAALFASIYSMTAVAF). Over 129 to 148 (DRYMAIIHPLQPRLSATATK) the chain is Cytoplasmic. The chain crosses the membrane as a helical span at residues 149 to 169 (VVIFVIWVLALLLAFPQGYYS). The Extracellular segment spans residues 170–194 (TTETMPSRVVCMIEWPEHPNRTYEK). Residues 195-219 (AYHICVTVLIYFLPLLVIGYAYTVV) traverse the membrane as a helical segment. Over 220–248 (GITLWASEIPGDSSDRYHEQVSAKRKVVK) the chain is Cytoplasmic. Residues 249–270 (MMIVVVCTFAICWLPFHIFFLL) form a helical membrane-spanning segment. The Extracellular portion of the chain corresponds to 271–283 (PYINPDLYLKKFI). Residues 284-308 (QQVYLASMWLAMSSTMYNPIIYCCL) traverse the membrane as a helical segment. Topologically, residues 309-407 (NDRFRLGFKH…SSSFYSNMLA (99 aa)) are cytoplasmic. Cysteine 322 carries the S-palmitoyl cysteine lipid modification. The interval 362–407 (VGAHEDEPEEGPKATPSSLDLTSNGSSRSNSKTMTESSSFYSNMLA) is disordered. Polar residues predominate over residues 376 to 407 (TPSSLDLTSNGSSRSNSKTMTESSSFYSNMLA).

This sequence belongs to the G-protein coupled receptor 1 family. As to quaternary structure, interacts with ARRB1.

The protein localises to the cell membrane. Its function is as follows. This is a receptor for the tachykinin neuropeptide substance P. It is probably associated with G proteins that activate a phosphatidylinositol-calcium second messenger system. The rank order of affinity of this receptor to tachykinins is: substance P &gt; substance K &gt; neuromedin K. The chain is Substance-P receptor (Tacr1) from Mus musculus (Mouse).